The sequence spans 614 residues: Fem-3 mRNA-binding factor 1 (614 aa).

Polar residues predominate over residues 1-24 (MDQSKMRYTNQFRKTPQKPTSTEV). A disordered region spans residues 1-34 (MDQSKMRYTNQFRKTPQKPTSTEVGNHHTPAHSP). The PUM-HD domain maps to 160–564 (TRSNNVLPTW…KMIETLAHLR (405 aa)). Pumilio repeat units follow at residues 185 to 223 (EVLDSGDLMKFAVDKTGCQFLEKAVKGSLTSYQKFQLFE), 224 to 263 (QVIGRKDDFLKLSTNIFGNYFVQEIIGMSLTTYDDDNIKR), 269 to 305 (NFISSQMTDMCLDKFACRVIQSSLQNMDLSLACKLVQ), 306 to 342 (ALPRDARLIAICVDQNANHVIQKVVAVIPLKNWEFIV), 343 to 382 (DFVATPEHLRQICFDKYGCRVVQTIIEKLTADSINVDLTS), 398 to 434 (SVTNRCQELATNEYANYIIQHIVSNDDLAVYRECIIE), 436 to 471 (CLMRNLLSLSQEKFASHVVEKAFLHAPMELLAEMMD), and 483 to 519 (TGKDALDIMMFHQFGNYVVQCMLTICCDAVSGRRQTK). The tract at residues 283–614 (FACRVIQSSL…NLRLMRTFSP (332 aa)) is binding to gld-3 isoform A.

Interacts (via C-terminus) with gld-3 isoform A in an RNA-independent manner. Expressed specifically in the germline (at protein level).

The protein localises to the cytoplasm. Its function is as follows. RNA-binding protein that binds to the consensus sequence 5'-UGUGCCAUA-3' in mRNA 3'-UTRs. Involved in the control of stem cells and sex determination in the C.elegans hermaphrodite germline. May also play a role in the hermaphrodite germline proliferation and oogenesis. Binds specifically to the regulatory region of fem-3 3'-UTR and mediates the sperm/oocyte switch. Negatively regulates gld-3 expression, possibly by directly binding to two sites within the 3'-UTR of gld-3 isoform b. In association with the cye-1/cdk-2 complex, negatively regulates gld-1 expression in the distal germline cells of the mitotic zone. By binding to the 3'-UTR, represses phosphatase lip-1 expression in the distal part of the germline mitotic zone. Suppresses germline tumor formation by preventing the dedifferentiation of secondary spermatocytes. This chain is Fem-3 mRNA-binding factor 1 (fbf-1), found in Caenorhabditis elegans.